A 748-amino-acid chain; its full sequence is Long-chain-alcohol oxidase FAO4B (748 aa).

The span at 1–18 (MEDVRRRNRGHPLLRSKK) shows a compositional bias: basic residues. The interval 1-25 (MEDVRRRNRGHPLLRSKKRGEGYNH) is disordered. 2 consecutive transmembrane segments (helical) span residues 89–109 (IILMILSFRFGTLLLCGSLCL) and 140–160 (FLLPFRITFFLAKFYTLFYFF). FAD is bound at residue 238–253 (CDAVVVGSGSGGGVAA). His-679 serves as the catalytic Proton acceptor.

It belongs to the GMC oxidoreductase family.

It is found in the membrane. It carries out the reaction a long-chain primary fatty alcohol + O2 = a long-chain fatty aldehyde + H2O2. In terms of biological role, long-chain fatty alcohol oxidase involved in the omega-oxidation pathway of lipid degradation. The polypeptide is Long-chain-alcohol oxidase FAO4B (FAO4B) (Arabidopsis thaliana (Mouse-ear cress)).